Reading from the N-terminus, the 221-residue chain is Ras-related protein Rab-27A (221 aa).

Position 2 is an N-acetylserine (serine 2). Serine 2 bears the Phosphoserine mark. 16–24 (GDSGVGKTS) is a GTP binding site. The short motif at 38-46 (FITTVGIDF) is the Effector region element. GTP contacts are provided by residues 74–78 (DTAGQ), 133–136 (NKSD), and 163–165 (SAA). Cysteine 123 and cysteine 188 form a disulfide bridge. 2 S-geranylgeranyl cysteine lipidation sites follow: cysteine 219 and cysteine 221. A Cysteine methyl ester modification is found at cysteine 221.

This sequence belongs to the small GTPase superfamily. Rab family. As to quaternary structure, binds SYTL1, SLAC2B, MYRIP, SYTL3, SYTL4 and SYTL5. Interacts with RPH3A and RPH3A. Binds MLPH and SYTL2. Interacts with UNC13D. Does not interact with the BLOC-3 complex (heterodimer of HPS1 and HPS4). Interacts (GDP-bound form preferentially) with DENND10. Found in all the examined tissues except in brain. Low expression was found in thymus, kidney, muscle and placenta. Detected in melanocytes, and in most tumor cell lines examined. Expressed in cytotoxic T-lymphocytes (CTL) and mast cells.

It is found in the membrane. Its subcellular location is the melanosome. The protein localises to the late endosome. The protein resides in the lysosome. The catalysed reaction is GTP + H2O = GDP + phosphate + H(+). Regulated by guanine nucleotide exchange factors (GEFs) which promote the exchange of bound GDP for free GTP, GTPase activating proteins (GAPs) which increase the GTP hydrolysis activity, and GDP dissociation inhibitors which inhibit the dissociation of the nucleotide from the GTPase. Activated by GEFs such as DENND10. In terms of biological role, small GTPase which cycles between active GTP-bound and inactive GDP-bound states. In its active state, binds to a variety of effector proteins to regulate homeostasis of late endocytic pathway, including endosomal positioning, maturation and secretion. Plays a role in cytotoxic granule exocytosis in lymphocytes. Required for both granule maturation and granule docking and priming at the immunologic synapse. The sequence is that of Ras-related protein Rab-27A (RAB27A) from Homo sapiens (Human).